The primary structure comprises 303 residues: UDP-3-O-acyl-N-acetylglucosamine deacetylase (303 aa).

3 residues coordinate Zn(2+): histidine 78, histidine 237, and aspartate 241. Residue histidine 264 is the Proton donor of the active site.

The protein belongs to the LpxC family. Requires Zn(2+) as cofactor.

The catalysed reaction is a UDP-3-O-[(3R)-3-hydroxyacyl]-N-acetyl-alpha-D-glucosamine + H2O = a UDP-3-O-[(3R)-3-hydroxyacyl]-alpha-D-glucosamine + acetate. Its pathway is glycolipid biosynthesis; lipid IV(A) biosynthesis; lipid IV(A) from (3R)-3-hydroxytetradecanoyl-[acyl-carrier-protein] and UDP-N-acetyl-alpha-D-glucosamine: step 2/6. Its function is as follows. Catalyzes the hydrolysis of UDP-3-O-myristoyl-N-acetylglucosamine to form UDP-3-O-myristoylglucosamine and acetate, the committed step in lipid A biosynthesis. The chain is UDP-3-O-acyl-N-acetylglucosamine deacetylase from Xanthomonas oryzae pv. oryzae (strain MAFF 311018).